Reading from the N-terminus, the 318-residue chain is UDP-N-acetylenolpyruvoylglucosamine reductase (318 aa).

In terms of domain architecture, FAD-binding PCMH-type spans 38-204 (IGGICPVVVE…LGIEILLKEG (167 aa)). Arginine 182 is a catalytic residue. Residues 212-232 (SLKDKRDRRNSSQPENKKSAG) form a disordered region. Over residues 213-229 (LKDKRDRRNSSQPENKK) the composition is skewed to basic and acidic residues. Serine 233 acts as the Proton donor in catalysis. Residue glutamate 310 is part of the active site.

This sequence belongs to the MurB family. FAD is required as a cofactor.

Its subcellular location is the cytoplasm. It catalyses the reaction UDP-N-acetyl-alpha-D-muramate + NADP(+) = UDP-N-acetyl-3-O-(1-carboxyvinyl)-alpha-D-glucosamine + NADPH + H(+). The protein operates within cell wall biogenesis; peptidoglycan biosynthesis. Its function is as follows. Cell wall formation. The protein is UDP-N-acetylenolpyruvoylglucosamine reductase of Leptospira borgpetersenii serovar Hardjo-bovis (strain JB197).